We begin with the raw amino-acid sequence, 318 residues long: tRNA U34 carboxymethyltransferase (318 aa).

Carboxy-S-adenosyl-L-methionine contacts are provided by Lys88, Trp102, Lys107, Gly126, Met192, Tyr196, and Arg311.

This sequence belongs to the class I-like SAM-binding methyltransferase superfamily. CmoB family. In terms of assembly, homotetramer.

The enzyme catalyses carboxy-S-adenosyl-L-methionine + 5-hydroxyuridine(34) in tRNA = 5-carboxymethoxyuridine(34) in tRNA + S-adenosyl-L-homocysteine + H(+). In terms of biological role, catalyzes carboxymethyl transfer from carboxy-S-adenosyl-L-methionine (Cx-SAM) to 5-hydroxyuridine (ho5U) to form 5-carboxymethoxyuridine (cmo5U) at position 34 in tRNAs. The sequence is that of tRNA U34 carboxymethyltransferase from Pseudomonas fluorescens (strain ATCC BAA-477 / NRRL B-23932 / Pf-5).